The following is a 794-amino-acid chain: DNA ligase (794 aa).

Residues 35 to 39, 84 to 85, and Glu126 each bind NAD(+); these read DAEYD and SL. Lys128 (N6-AMP-lysine intermediate) is an active-site residue. Residues Arg149, Glu186, Lys302, and Lys326 each coordinate NAD(+). Zn(2+) is bound by residues Cys420, Cys423, Cys450, and Cys456. A BRCT domain is found at 711–794; it reads VEGLPLAGQT…KLFDEHGVAR (84 aa).

Belongs to the NAD-dependent DNA ligase family. LigA subfamily. It depends on Mg(2+) as a cofactor. Mn(2+) serves as cofactor.

The catalysed reaction is NAD(+) + (deoxyribonucleotide)n-3'-hydroxyl + 5'-phospho-(deoxyribonucleotide)m = (deoxyribonucleotide)n+m + AMP + beta-nicotinamide D-nucleotide.. In terms of biological role, DNA ligase that catalyzes the formation of phosphodiester linkages between 5'-phosphoryl and 3'-hydroxyl groups in double-stranded DNA using NAD as a coenzyme and as the energy source for the reaction. It is essential for DNA replication and repair of damaged DNA. This is DNA ligase from Pseudomonas aeruginosa (strain UCBPP-PA14).